Here is a 767-residue protein sequence, read N- to C-terminus: Start control protein cdc10 (767 aa).

Positions 17–44 (FSYQKRPEDEPSQPLSNRNINKLNDSST) are disordered. Polar residues predominate over residues 29–44 (QPLSNRNINKLNDSST). The HTH APSES-type domain maps to 66-173 (ELYAVECSGM…FNLDLFPKFS (108 aa)). Residues 98 to 119 (ISQILRLAGTSSSENAKELDDI) constitute a DNA-binding region (H-T-H motif). Residues 189-230 (TSSFNTRSPLRNHNFSNPSKSSKNGVHTINNMQSSPSPSSSF) are disordered. Positions 192 to 221 (FNTRSPLRNHNFSNPSKSSKNGVHTINNMQ) are enriched in polar residues. Ser252 carries the phosphoserine modification. A Nuclear localization signal motif is present at residues 261-264 (KRHR). ANK repeat units lie at residues 356–385 (LGHAALHWAAAVAKMPLLQALIHKGANPLR) and 483–512 (NGDTALNIAARIGNKNIVEVLMQAGASAYI). The segment at 542–562 (VSLMSENLSSKEKTAVPPRQK) is disordered.

In terms of assembly, DSC1 contains cdc10 and sct1/res1. Interacts with pol5.

It localises to the nucleus. In terms of biological role, major component of the cell cycle transcription factor complex MBF (MCB binding factor, also known as DSC1), that controls G1-S phase specific gene expression. Involved in the control of rRNA production, via interaction with pol5. May be involved in the transcriptional regulation of the cdc22 and cdt1 genes. In fission yeast, two genes, cdc10 and cdc2, are required for the cell cycle control called start, the point early in the G1 phase at which cells become committed to the mitotic cycle. This Schizosaccharomyces pombe (strain 972 / ATCC 24843) (Fission yeast) protein is Start control protein cdc10 (cdc10).